Consider the following 218-residue polypeptide: ATP phosphoribosyltransferase (218 aa).

It belongs to the ATP phosphoribosyltransferase family. Short subfamily. As to quaternary structure, heteromultimer composed of HisG and HisZ subunits.

The protein localises to the cytoplasm. It carries out the reaction 1-(5-phospho-beta-D-ribosyl)-ATP + diphosphate = 5-phospho-alpha-D-ribose 1-diphosphate + ATP. Its pathway is amino-acid biosynthesis; L-histidine biosynthesis; L-histidine from 5-phospho-alpha-D-ribose 1-diphosphate: step 1/9. In terms of biological role, catalyzes the condensation of ATP and 5-phosphoribose 1-diphosphate to form N'-(5'-phosphoribosyl)-ATP (PR-ATP). Has a crucial role in the pathway because the rate of histidine biosynthesis seems to be controlled primarily by regulation of HisG enzymatic activity. This chain is ATP phosphoribosyltransferase, found in Trichormus variabilis (strain ATCC 29413 / PCC 7937) (Anabaena variabilis).